We begin with the raw amino-acid sequence, 671 residues long: Annexin A6 (671 aa).

8 Annexin repeats span residues 18–89, 90–161, 173–245, 249–320, 361–432, 433–504, 519–594, and 598–669; these read FNAS…SLMR, PPAY…VLLQ, DLVE…AVVK, STAE…KLCE, FNDD…GLML, TPAQ…SLAL, EDAK…AIVR, and NKPA…LCGG.

It belongs to the annexin family.

Its subcellular location is the cytoplasm. It is found in the melanosome. Its function is as follows. May associate with CD21. May regulate the release of Ca(2+) from intracellular stores. The chain is Annexin A6 (ANXA6) from Gallus gallus (Chicken).